Consider the following 430-residue polypeptide: Cytochrome c biogenesis protein CcsB (430 aa).

A run of 3 helical transmembrane segments spans residues 14 to 34 (LRLAIALLLLIAAASAVGTIL), 72 to 92 (SVWFLALLAWLGLALMLCSWR), and 162 to 182 (VGPLLVHTGLVLLLIGAAWGA).

This sequence belongs to the Ccs1/CcsB family. May interact with CcsA.

The protein resides in the cellular thylakoid membrane. In terms of biological role, required during biogenesis of c-type cytochromes (cytochrome c6 and cytochrome f) at the step of heme attachment. The chain is Cytochrome c biogenesis protein CcsB from Synechococcus sp. (strain WH7803).